The chain runs to 211 residues: MPAVRIKICGITRVEDALAAAAAGADAIGLVFYAKSPRAVDIHRAREIVRALPPFVTSVGLFVNASRCELGEILDAVPLDLLQFHGDERAEDCEGHRRPYLKALRMKPGDDIVGRAAAYPGAAGILLDTYVEGVPGGTGAAFDWSLVPADLGKPLVLAGGLTPDNVGRAVEQVKPYAVDVSGGVEASKGIKDAARVRAFVDAVRSRRRDET.

Belongs to the TrpF family.

The enzyme catalyses N-(5-phospho-beta-D-ribosyl)anthranilate = 1-(2-carboxyphenylamino)-1-deoxy-D-ribulose 5-phosphate. It functions in the pathway amino-acid biosynthesis; L-tryptophan biosynthesis; L-tryptophan from chorismate: step 3/5. The chain is N-(5'-phosphoribosyl)anthranilate isomerase from Pseudomonas aeruginosa (strain UCBPP-PA14).